Reading from the N-terminus, the 230-residue chain is Thioredoxin domain-containing protein PLP3A (230 aa).

The Thioredoxin domain occupies 89 to 173; the sequence is VSEGDFLGEV…GVAMDRLVGF (85 aa). Residues 197 to 230 form a disordered region; sequence LSKKKKEEDDEDAEYQESIRRSVRSSENLDSDSD.

The protein belongs to the phosducin family. In terms of assembly, interacts with TUBB2, TUBB3, TUBB4 and TUBB5. In terms of tissue distribution, expressed in embryos, shoot meristems, leaf primordia, root meristems, floral meristems and young floral buds.

The protein localises to the cytoplasm. The protein resides in the nucleus. In terms of biological role, tubulin-binding protein involved in microtubule formation. This chain is Thioredoxin domain-containing protein PLP3A (PLP3A), found in Arabidopsis thaliana (Mouse-ear cress).